We begin with the raw amino-acid sequence, 205 residues long: Small ribosomal subunit protein uS4 (205 aa).

The region spanning 95–156 is the S4 RNA-binding domain; the sequence is SRLDNIVYRM…KTIKIPIVKA (62 aa).

The protein belongs to the universal ribosomal protein uS4 family. In terms of assembly, part of the 30S ribosomal subunit. Contacts protein S5. The interaction surface between S4 and S5 is involved in control of translational fidelity.

Functionally, one of the primary rRNA binding proteins, it binds directly to 16S rRNA where it nucleates assembly of the body of the 30S subunit. Its function is as follows. With S5 and S12 plays an important role in translational accuracy. In Mycoplasma pneumoniae (strain ATCC 29342 / M129 / Subtype 1) (Mycoplasmoides pneumoniae), this protein is Small ribosomal subunit protein uS4.